Consider the following 452-residue polypeptide: Phosphoglucosamine mutase (452 aa).

Residue S108 is the Phosphoserine intermediate of the active site. 4 residues coordinate Mg(2+): S108, D247, D249, and D251. S108 carries the post-translational modification Phosphoserine.

Belongs to the phosphohexose mutase family. Mg(2+) serves as cofactor. Post-translationally, activated by phosphorylation.

It catalyses the reaction alpha-D-glucosamine 1-phosphate = D-glucosamine 6-phosphate. In terms of biological role, catalyzes the conversion of glucosamine-6-phosphate to glucosamine-1-phosphate. This chain is Phosphoglucosamine mutase, found in Burkholderia mallei (strain NCTC 10247).